A 49-amino-acid chain; its full sequence is uncharacterized protein (49 aa).

A helical membrane pass occupies residues 17 to 39 (LLVFDTSLYIPPFMLSFIGYSLS).

The protein resides in the membrane. This is an uncharacterized protein from Saccharomyces cerevisiae (strain ATCC 204508 / S288c) (Baker's yeast).